Here is a 408-residue protein sequence, read N- to C-terminus: Cytochrome P450 55A3 (408 aa).

Residue cysteine 357 coordinates heme.

The protein belongs to the cytochrome P450 family. Heme is required as a cofactor.

This chain is Cytochrome P450 55A3 (CYP55A3), found in Fusarium lichenicola (Cylindrocarpon lichenicola).